Here is a 332-residue protein sequence, read N- to C-terminus: MKTPFTILAALTVATTLADVPDEWDIIELSFGEPTSVDSGEIKFAMCPKTECPNVESEEEFKAAIKAKRAKGKKVLLSIGGQNGQVQLKTTEARDKFVSSVGGIIDKYGLDGLDIDFEGHSLYLDQGDTDFKNPKTSVVVNLIAALKSLKEKYGKAFVLTMAPETFFVQLGYSSYGPSNGNDARAGSYLPVIHAMRDDLTVLQVQNYNSGPIIGLDDQYHNVGTPDFLIAMADMLKAGFPVAKTNNTFPPLREDQIAIGLPSTVSAGNGFVDEKGVQDALNCLMKGESCGTYKPRGGKSPSFRGLMAWSINWDKFSNWGFLNPHRKYLDSFP.

The first 18 residues, 1 to 18, serve as a signal peptide directing secretion; that stretch reads MKTPFTILAALTVATTLA. A GH18 domain is found at 19-331; that stretch reads DVPDEWDIIE…NPHRKYLDSF (313 aa). The active-site Proton donor is the glutamate 118. Asparagine 245 is a glycosylation site (N-linked (GlcNAc...) asparagine).

It belongs to the glycosyl hydrolase 18 family. Chitinase class II subfamily.

It is found in the secreted. The enzyme catalyses Random endo-hydrolysis of N-acetyl-beta-D-glucosaminide (1-&gt;4)-beta-linkages in chitin and chitodextrins.. Functionally, degrades chitin and chitotriose. The protein is Probable class II chitinase ARB_00204 of Arthroderma benhamiae (strain ATCC MYA-4681 / CBS 112371) (Trichophyton mentagrophytes).